A 242-amino-acid polypeptide reads, in one-letter code: NADPH-dependent pterin aldehyde reductase (242 aa).

Thr2 carries the N-acetylthreonine modification. 21–50 provides a ligand contact to NADP(+); sequence LITGVSKGLGRALALELAKRGHTVIGCARS. A substrate-binding site is contributed by Ser153. Tyr166 functions as the Proton acceptor in the catalytic mechanism. Lys170 contributes to the NADP(+) binding site.

Belongs to the short-chain dehydrogenases/reductases (SDR) family. In terms of assembly, homodimer. Mostly expressed in seeds, and, to a lower extent, in roots, leaves, flowers and siliques.

It localises to the cytoplasm. NADPH-dependent pterin aldehyde reductase involved in pterin aldehyde salvage during folate turnover. Catalyzes the reduction of diverse aromatic and aliphatic aldehydes (e.g. acetaldehyde, n-propanal, 1-naphthaldehyde, benzaldehyde, cinnamaldehyde, n-butanal, n-hexanal, n-pentanal, 2-naphthaldehyde, n-octanal, n-nonanal and n-heptanal), in addition to the conversion of pterin-6-aldehyde (PtCHO) to 6-hydroxymethylpterin (PtCH(2)OH), and the conversion of dihydropterin-6-aldehyde (H(2)PtCHO) to 6-hydroxymethyldihydropterin (H(2)PtCH(2)OH). Cannot reduce the pterin ring. This is NADPH-dependent pterin aldehyde reductase from Arabidopsis thaliana (Mouse-ear cress).